We begin with the raw amino-acid sequence, 109 residues long: uncharacterized protein (109 aa).

This is an uncharacterized protein from Methanocaldococcus jannaschii (strain ATCC 43067 / DSM 2661 / JAL-1 / JCM 10045 / NBRC 100440) (Methanococcus jannaschii).